A 745-amino-acid chain; its full sequence is Polyribonucleotide nucleotidyltransferase (745 aa).

Residues D487 and D493 each coordinate Mg(2+). Positions 554–613 (PRIETMQIPTDKIRDVIGTGGKIIREIVEKTGAKINIEDTGVVKIASSDGKAIKAAYNWI) constitute a KH domain. The 69-residue stretch at 623-691 (GTIYDGTIVK…ERGKIRLSMK (69 aa)) folds into the S1 motif domain. The tract at residues 695–745 (QETGEDITEKLKAERAERGEPEREERSDRGDRGDRGPRRDRGERRRESSGE) is disordered. The segment covering 701–745 (ITEKLKAERAERGEPEREERSDRGDRGDRGPRRDRGERRRESSGE) has biased composition (basic and acidic residues).

The protein belongs to the polyribonucleotide nucleotidyltransferase family. Requires Mg(2+) as cofactor.

Its subcellular location is the cytoplasm. The catalysed reaction is RNA(n+1) + phosphate = RNA(n) + a ribonucleoside 5'-diphosphate. Involved in mRNA degradation. Catalyzes the phosphorolysis of single-stranded polyribonucleotides processively in the 3'- to 5'-direction. The sequence is that of Polyribonucleotide nucleotidyltransferase from Methylorubrum populi (strain ATCC BAA-705 / NCIMB 13946 / BJ001) (Methylobacterium populi).